Here is a 302-residue protein sequence, read N- to C-terminus: Protoheme IX farnesyltransferase (302 aa).

9 helical membrane passes run 27–47 (VVAL…PGMV), 53–73 (LFGL…NHVI), 100–120 (LVFA…AVNV), 121–141 (LTAV…TVFL), 149–169 (IVWG…AVTG), 175–195 (PLLL…ALAI), 215–235 (VAFT…VSLV), 237–257 (FIIH…GIGF), and 273–293 (AMPT…LLLV).

Belongs to the UbiA prenyltransferase family. Protoheme IX farnesyltransferase subfamily.

Its subcellular location is the cell inner membrane. It carries out the reaction heme b + (2E,6E)-farnesyl diphosphate + H2O = Fe(II)-heme o + diphosphate. Its pathway is porphyrin-containing compound metabolism; heme O biosynthesis; heme O from protoheme: step 1/1. In terms of biological role, converts heme B (protoheme IX) to heme O by substitution of the vinyl group on carbon 2 of heme B porphyrin ring with a hydroxyethyl farnesyl side group. This chain is Protoheme IX farnesyltransferase, found in Thioalkalivibrio sulfidiphilus (strain HL-EbGR7).